A 176-amino-acid chain; its full sequence is Ribosome maturation factor RimP (176 aa).

Positions 143 to 176 (LKPQTAKKKGRQEETEDMTLELDAVSRAVPEAEI) are disordered.

This sequence belongs to the RimP family.

It localises to the cytoplasm. Functionally, required for maturation of 30S ribosomal subunits. The protein is Ribosome maturation factor RimP of Chlorobium luteolum (strain DSM 273 / BCRC 81028 / 2530) (Pelodictyon luteolum).